The primary structure comprises 304 residues: UDP-N-acetylenolpyruvoylglucosamine reductase (304 aa).

The region spanning 33–198 (KVGGPVDILL…LRATFNLVNG (166 aa)) is the FAD-binding PCMH-type domain. Residue arginine 177 is part of the active site. Serine 227 functions as the Proton donor in the catalytic mechanism. The active site involves glutamate 297.

Belongs to the MurB family. Requires FAD as cofactor.

It localises to the cytoplasm. The enzyme catalyses UDP-N-acetyl-alpha-D-muramate + NADP(+) = UDP-N-acetyl-3-O-(1-carboxyvinyl)-alpha-D-glucosamine + NADPH + H(+). The protein operates within cell wall biogenesis; peptidoglycan biosynthesis. Cell wall formation. The protein is UDP-N-acetylenolpyruvoylglucosamine reductase of Clostridium beijerinckii (strain ATCC 51743 / NCIMB 8052) (Clostridium acetobutylicum).